A 492-amino-acid chain; its full sequence is 2-succinylbenzoate--CoA ligase (492 aa).

It belongs to the ATP-dependent AMP-binding enzyme family. MenE subfamily.

It carries out the reaction 2-succinylbenzoate + ATP + CoA = 2-succinylbenzoyl-CoA + AMP + diphosphate. Its pathway is quinol/quinone metabolism; 1,4-dihydroxy-2-naphthoate biosynthesis; 1,4-dihydroxy-2-naphthoate from chorismate: step 5/7. The protein operates within quinol/quinone metabolism; menaquinone biosynthesis. Converts 2-succinylbenzoate (OSB) to 2-succinylbenzoyl-CoA (OSB-CoA). The sequence is that of 2-succinylbenzoate--CoA ligase from Staphylococcus aureus (strain USA300 / TCH1516).